The sequence spans 360 residues: Phenylalanine--tRNA ligase alpha subunit (360 aa).

Glu260 serves as a coordination point for Mg(2+).

It belongs to the class-II aminoacyl-tRNA synthetase family. Phe-tRNA synthetase alpha subunit type 1 subfamily. Tetramer of two alpha and two beta subunits. Mg(2+) is required as a cofactor.

The protein resides in the cytoplasm. The catalysed reaction is tRNA(Phe) + L-phenylalanine + ATP = L-phenylalanyl-tRNA(Phe) + AMP + diphosphate + H(+). In Beijerinckia indica subsp. indica (strain ATCC 9039 / DSM 1715 / NCIMB 8712), this protein is Phenylalanine--tRNA ligase alpha subunit.